The following is a 614-amino-acid chain: WD repeat-containing protein 26 (614 aa).

2 stretches are compositionally biased toward low complexity: residues 1–19 and 34–44; these read MQAN…AGSG and SNGVLSSNNGL. Positions 1–65 are disordered; it reads MQANGAAAAA…PGGRKKKRLS (65 aa). The region spanning 67 to 99 is the LisH domain; sequence ADEDVIRLIGQHLHGLGLNQTVDLLMQESGCRL. The region spanning 100 to 184 is the CTLH domain; sequence EHPSATKFRN…EYLEDGKVLE (85 aa). WD repeat units follow at residues 306 to 345, 352 to 391, 397 to 437, 477 to 516, 519 to 561, and 564 to 604; these read EHCN…HQLK, GHAY…GELR, SHED…DSWE, QEDH…LVRK, GVTQ…PIAE, and GHTR…DNQE.

Forms homooligomers. Identified in the CTLH complex that contains at least MAEA, RMND5A (or alternatively its paralog RMND5B), GID8, WDR26, and RANBP9 and/or RANBP10. Interacts with DDB1-CUL4A/B E3 ligase complexes.

It localises to the cytoplasm. Its subcellular location is the nucleus. The protein resides in the mitochondrion. In terms of biological role, G-beta-like protein involved in cell signal transduction. Acts as a negative regulator in MAPK signaling pathway. Functions as a scaffolding protein to promote G beta:gamma-mediated PLCB2 plasma membrane translocation and subsequent activation in leukocytes. Core component of the CTLH E3 ubiquitin-protein ligase complex that mediates ubiquitination and subsequent proteasomal degradation of target proteins. Acts as a negative regulator of the canonical Wnt signaling pathway through preventing ubiquitination of beta-catenin CTNNB1 by the beta-catenin destruction complex, thus negatively regulating CTNNB1 degradation. Serves as a scaffold to coordinate PI3K/AKT pathway-driven cell growth and migration. Protects cells from oxidative stress-induced apoptosis via the down-regulation of AP-1 transcriptional activity as well as by inhibiting cytochrome c release from mitochondria. Also protects cells by promoting hypoxia-mediated autophagy and mitophagy. The sequence is that of WD repeat-containing protein 26 (wdr26) from Xenopus tropicalis (Western clawed frog).